The following is a 98-amino-acid chain: Co-chaperonin GroES (98 aa).

Belongs to the GroES chaperonin family. As to quaternary structure, heptamer of 7 subunits arranged in a ring. Interacts with the chaperonin GroEL.

It localises to the cytoplasm. Its function is as follows. Together with the chaperonin GroEL, plays an essential role in assisting protein folding. The GroEL-GroES system forms a nano-cage that allows encapsulation of the non-native substrate proteins and provides a physical environment optimized to promote and accelerate protein folding. GroES binds to the apical surface of the GroEL ring, thereby capping the opening of the GroEL channel. This Bartonella tribocorum (strain CIP 105476 / IBS 506) protein is Co-chaperonin GroES.